The primary structure comprises 193 residues: Transcriptional repressor NrdR (193 aa).

A zinc finger spans residues 3–34; sequence CPYCGGLDTQVKDSRPSEDASAIRRRRICPDC. The region spanning 49 to 139 is the ATP-cone domain; the sequence is LTVVKRSGRK…VYKNFREAKD (91 aa). Residues 150-193 are disordered; sequence DQQDGAVPQAEADRPIGAGPPSEAAQPAAGEGGDAPMRRARSRA.

The protein belongs to the NrdR family. Requires Zn(2+) as cofactor.

Negatively regulates transcription of bacterial ribonucleotide reductase nrd genes and operons by binding to NrdR-boxes. The protein is Transcriptional repressor NrdR of Methylobacterium nodulans (strain LMG 21967 / CNCM I-2342 / ORS 2060).